The following is a 245-amino-acid chain: 23S rRNA (guanosine-2'-O-)-methyltransferase RlmB (245 aa).

Residues Gly197, Ile217, and Leu226 each contribute to the S-adenosyl-L-methionine site.

This sequence belongs to the class IV-like SAM-binding methyltransferase superfamily. RNA methyltransferase TrmH family. RlmB subfamily.

It localises to the cytoplasm. It catalyses the reaction guanosine(2251) in 23S rRNA + S-adenosyl-L-methionine = 2'-O-methylguanosine(2251) in 23S rRNA + S-adenosyl-L-homocysteine + H(+). Functionally, specifically methylates the ribose of guanosine 2251 in 23S rRNA. The chain is 23S rRNA (guanosine-2'-O-)-methyltransferase RlmB from Bordetella parapertussis (strain 12822 / ATCC BAA-587 / NCTC 13253).